We begin with the raw amino-acid sequence, 765 residues long: 5-methyltetrahydropteroyltriglutamate--homocysteine methyltransferase (765 aa).

5-methyltetrahydropteroyltri-L-glutamate is bound by residues 18 to 21 and Lys114; that span reads REWK. Residues 437–439 and Glu490 contribute to the L-homocysteine site; that span reads IGS. Residues 437-439 and Glu490 contribute to the L-methionine site; that span reads IGS. Residue Trp567 coordinates 5-methyltetrahydropteroyltri-L-glutamate. Residue Asp605 coordinates L-homocysteine. Asp605 contacts L-methionine. Residue Glu611 participates in 5-methyltetrahydropteroyltri-L-glutamate binding. Residues His647, Cys649, and Glu671 each coordinate Zn(2+). Residue His700 is the Proton donor of the active site. Cys732 is a binding site for Zn(2+).

This sequence belongs to the vitamin-B12 independent methionine synthase family. The cofactor is Zn(2+).

The catalysed reaction is 5-methyltetrahydropteroyltri-L-glutamate + L-homocysteine = tetrahydropteroyltri-L-glutamate + L-methionine. It functions in the pathway amino-acid biosynthesis; L-methionine biosynthesis via de novo pathway; L-methionine from L-homocysteine (MetE route): step 1/1. Functionally, catalyzes the transfer of a methyl group from 5-methyltetrahydrofolate to homocysteine resulting in methionine formation. This Listeria innocua serovar 6a (strain ATCC BAA-680 / CLIP 11262) protein is 5-methyltetrahydropteroyltriglutamate--homocysteine methyltransferase.